A 757-amino-acid polypeptide reads, in one-letter code: Inhibitor of nuclear factor kappa-B kinase subunit beta (757 aa).

One can recognise a Protein kinase domain in the interval 15 to 300 (WEMKERLGTG…DPQYGPNGCF (286 aa)). Residues 21 to 29 (LGTGGFGNV) and Lys44 contribute to the ATP site. Asp145 (proton acceptor) is an active-site residue. Lys163 participates in a covalent cross-link: Glycyl lysine isopeptide (Lys-Gly) (interchain with G-Cter in ubiquitin). Phosphoserine; by TBK1 and PKC/PRKCZ is present on Ser177. Cys179 carries the S-nitrosocysteine modification. Ser181 is modified (phosphoserine; by TBK1, PKC/PRKCZ and PDPK1). Residue Pro191 is modified to Hydroxyproline. Residues 458–479 (LLRNNSCLSKMKNAMASTAQQL) are leucine-zipper. A Phosphoserine; by autocatalysis modification is found at Ser670. The residue at position 672 (Ser672) is a Phosphoserine. Phosphoserine; by autocatalysis is present on residues Ser675, Ser682, Ser689, Ser692, Ser697, Ser705, Ser733, and Ser740. Residues 683–703 (HPGQLMSQPSSACDSLPESDK) are disordered. Positions 737 to 742 (LDWSWL) are NEMO-binding.

Belongs to the protein kinase superfamily. Ser/Thr protein kinase family. I-kappa-B kinase subfamily. Component of the I-kappa-B-kinase (IKK) core complex consisting of CHUK, IKBKB and IKBKG; probably four alpha/CHUK-beta/IKBKB dimers are associated with four gamma/IKBKG subunits. The IKK core complex seems to associate with regulatory or adapter proteins to form a IKK-signalosome holo-complex. The IKK complex associates with TERF2IP/RAP1, leading to promote IKK-mediated phosphorylation of RELA/p65. Part of a complex composed of NCOA2, NCOA3, CHUK/IKKA, IKBKB, IKBKG and CREBBP. Part of a 70-90 kDa complex at least consisting of CHUK/IKKA, IKBKB, NFKBIA, RELA, ELP1 and MAP3K14. Found in a membrane raft complex, at least composed of BCL10, CARD11, DPP4 and IKBKB. Interacts with SQSTM1 through PRKCZ or PRKCI. Forms an NGF-induced complex with IKBKB, PRKCI and TRAF6. May interact with MAVS/IPS1. Interacts with NALP2. Interacts with TICAM1. Interacts with FAF1; the interaction disrupts the IKK complex formation. Interacts with ATM. Part of a ternary complex consisting of TANK, IKBKB and IKBKG. Interacts with NIBP; the interaction is direct. Interacts with ARRB1 and ARRB2. Interacts with TRIM21. Interacts with NLRC5; prevents IKBKB phosphorylation and kinase activity. Interacts with PDPK1. Interacts with EIF2AK2/PKR. The phosphorylated form interacts with PPM1A and PPM1B. Interacts with ZNF268 isoform 2; the interaction is further increased in a TNF-alpha-dependent manner. Interacts with IKBKE. Interacts with ZC3H12A. Interacts with AKAP13. Interacts with LRRC14; disrupts IKBKB-IKBKG interaction preventing I-kappa-B-kinase (IKK) core complex formation and leading to a decrease of IKBKB phosphorylation and NF-kappaB activation. Interacts with SASH1. Interacts with ARFIP2. Interacts with FKBP5. Interacts with kinase TBK1; the complex interacts with STAT1, leading to phosphorylation of STAT1 on 'Thr-748' by IKBKB. Upon cytokine stimulation, phosphorylated on Ser-177 and Ser-181 by MEKK1 and/or MAP3K14/NIK as well as TBK1 and PRKCZ; which enhances activity. Phosphorylated by MAP3K7/TAK1 in response to NOD1 and NOD2 signaling, promoting activation and phosphorylation of NF-kappa-B inhibitors, leading to NF-kappa-B activation. Once activated, autophosphorylates on the C-terminal serine cluster; which decreases activity and prevents prolonged activation of the inflammatory response. Phosphorylated by the IKK-related kinases TBK1 and IKBKE, which is associated with reduced CHUK/IKKA and IKBKB activity and NF-kappa-B-dependent gene transcription. Dephosphorylated at Ser-177 and Ser-181 by PPM1A and PPM1B. In terms of processing, ubiquitinated. Monoubiquitination involves TRIM21 that leads to inhibition of Tax-induced NF-kappa-B signaling. 'Ser-163' may not serve as a monoubiquitination site. Ubiquitination on 'Ser-163' may modulate phosphorylation on C-terminal serine residues. Post-translationally, hydroxylated by PHD1/EGLN2, loss of hydroxylation under hypoxic conditions results in activation of NF-kappa-B. In terms of tissue distribution, detected in heart (at protein level). Expressed in liver, kidney and spleen.

It is found in the cytoplasm. It localises to the nucleus. The protein localises to the membrane raft. It catalyses the reaction L-seryl-[I-kappa-B protein] + ATP = O-phospho-L-seryl-[I-kappa-B protein] + ADP + H(+). The catalysed reaction is L-seryl-[protein] + ATP = O-phospho-L-seryl-[protein] + ADP + H(+). It carries out the reaction L-threonyl-[protein] + ATP = O-phospho-L-threonyl-[protein] + ADP + H(+). In terms of biological role, serine kinase that plays an essential role in the NF-kappa-B signaling pathway which is activated by multiple stimuli such as inflammatory cytokines, bacterial or viral products, DNA damages or other cellular stresses. Acts as a part of the canonical IKK complex in the conventional pathway of NF-kappa-B activation. Phosphorylates inhibitors of NF-kappa-B on 2 critical serine residues. These modifications allow polyubiquitination of the inhibitors and subsequent degradation by the proteasome. In turn, free NF-kappa-B is translocated into the nucleus and activates the transcription of hundreds of genes involved in immune response, growth control, or protection against apoptosis. In addition to the NF-kappa-B inhibitors, phosphorylates several other components of the signaling pathway including NEMO/IKBKG, NF-kappa-B subunits RELA and NFKB1, as well as IKK-related kinases TBK1 and IKBKE. IKK-related kinase phosphorylations may prevent the overproduction of inflammatory mediators since they exert a negative regulation on canonical IKKs. Phosphorylates FOXO3, mediating the TNF-dependent inactivation of this pro-apoptotic transcription factor. Also phosphorylates other substrates including NAA10, NCOA3, BCL10 and IRS1. Phosphorylates RIPK1 at 'Ser-25' which represses its kinase activity and consequently prevents TNF-mediated RIPK1-dependent cell death. Phosphorylates the C-terminus of IRF5, stimulating IRF5 homodimerization and translocation into the nucleus. Following bacterial lipopolysaccharide (LPS)-induced TLR4 endocytosis, phosphorylates STAT1 at 'Thr-748' which restricts interferon signaling and anti-inflammatory responses and promotes innate inflammatory responses. IKBKB-mediated phosphorylation of STAT1 at 'Thr-748' promotes binding of STAT1 to the ARID5A promoter, resulting in transcriptional activation of ARID5A and subsequent ARID5A-mediated stabilization of IL6. It also promotes binding of STAT1 to the IL12B promoter and activation of IL12B transcription. The sequence is that of Inhibitor of nuclear factor kappa-B kinase subunit beta (Ikbkb) from Mus musculus (Mouse).